The primary structure comprises 473 residues: Membrane-bound acylglycerophosphatidylinositol O-acyltransferase MBOAT7 (473 aa).

Over 1–5 the chain is Cytoplasmic; sequence MTPEE. The helical transmembrane segment at 6–22 threads the bilayer; it reads WTYLMVLLISIPVGFLF. The Lumenal portion of the chain corresponds to 23–33; it reads KKAGPGLKRWG. Residues 34 to 57 form a helical membrane-spanning segment; the sequence is AAAVGLGLTLFTCGPHSLHSLITI. At 58 to 73 the chain is on the cytoplasmic side; sequence LGTWALIQAQPCSCHA. A helical membrane pass occupies residues 74 to 93; sequence LALAWTFSYLLFFRALSLLG. Topologically, residues 94–194 are lumenal; the sequence is LPTPTPFTNA…VPSLRPLLRR (101 aa). The helical transmembrane segment at 195–212 threads the bilayer; it reads AWPAPLFGLLFLLSSHLF. Residues 213-231 are Cytoplasmic-facing; the sequence is PLEAVREDAFYARPLPTRL. A helical membrane pass occupies residues 232–261; the sequence is FYMIPVFFAFRMRFYVAWIAAECGCIAAGF. At 262–426 the chain is on the lumenal side; that stretch reads GAYPVAAKAR…LSMADTLRYW (165 aa). Residue Asn-321 is glycosylated (N-linked (GlcNAc...) asparagine). A helical membrane pass occupies residues 427 to 447; that stretch reads ASIYFWVHFLALACLGLGLVL. The Cytoplasmic segment spans residues 448-473; the sequence is GGGSPSKRKTPSQATSSQAKEKLREE. Positions 451–473 are disordered; the sequence is SPSKRKTPSQATSSQAKEKLREE.

It belongs to the membrane-bound acyltransferase family. In terms of assembly, interacts with SPTSSA; the interaction facilitates MBOAT7 location to mitochondria-associated membranes (MAMs).

The protein resides in the endoplasmic reticulum membrane. The catalysed reaction is a 1-acyl-sn-glycero-3-phospho-(1D-myo-inositol) + an acyl-CoA = a 1,2-diacyl-sn-glycero-3-phospho-(1D-myo-inositol) + CoA. It catalyses the reaction 1-octadecanoyl-sn-glycero-3-phospho-(1D-myo-inositol) + (5Z,8Z,11Z,14Z)-eicosatetraenoyl-CoA = 1-octadecanoyl-2-(5Z,8Z,11Z,14Z-eicosatetraenoyl)-sn-glycero-3-phospho-(1D-myo-inositol) + CoA. The enzyme catalyses a 1-acyl-sn-glycero-3-phospho-(1D-myo-inositol) + (5Z,8Z,11Z,14Z)-eicosatetraenoyl-CoA = a 1-acyl-2-(5Z,8Z,11Z,14Z-eicosatetraenoyl)-sn-glycero-3-phospho-(1D-myo-inositol) + CoA. It carries out the reaction (5Z,8Z,11Z,14Z)-eicosatetraenoyl-CoA + 1-hexadecanoyl-sn-glycero-3-phosphocholine = 1-hexadecanoyl-2-(5Z,8Z,11Z,14Z-eicosatetraenoyl)-sn-glycero-3-phosphocholine + CoA. Its pathway is lipid metabolism; phospholipid metabolism. Functionally, acyltransferase which catalyzes the transfer of an acyl group from an acyl-CoA to a lysophosphatidylinositol (1-acylglycerophosphatidylinositol or LPI) leading to the production of a phosphatidylinositol (1,2-diacyl-sn-glycero-3-phosphoinositol or PI) and participates in the reacylation step of the phospholipid remodeling pathway also known as the Lands cycle. Prefers arachidonoyl-CoA as the acyl donor, thus contributing to the regulation of free levels arachidonic acid in cell. In liver, participates in the regulation of triglyceride metabolism through the phosphatidylinositol acyl-chain remodeling regulation. In Mus musculus (Mouse), this protein is Membrane-bound acylglycerophosphatidylinositol O-acyltransferase MBOAT7.